Here is a 362-residue protein sequence, read N- to C-terminus: Phosphoserine aminotransferase (362 aa).

The L-glutamate site is built by Ser9 and Arg42. Pyridoxal 5'-phosphate-binding positions include 76–77 (GR), Trp102, Thr153, Asp174, and Gln197. Lys198 carries the N6-(pyridoxal phosphate)lysine modification. Pyridoxal 5'-phosphate is bound at residue 239–240 (NT).

The protein belongs to the class-V pyridoxal-phosphate-dependent aminotransferase family. SerC subfamily. As to quaternary structure, homodimer. It depends on pyridoxal 5'-phosphate as a cofactor.

It is found in the cytoplasm. The catalysed reaction is O-phospho-L-serine + 2-oxoglutarate = 3-phosphooxypyruvate + L-glutamate. It carries out the reaction 4-(phosphooxy)-L-threonine + 2-oxoglutarate = (R)-3-hydroxy-2-oxo-4-phosphooxybutanoate + L-glutamate. It functions in the pathway amino-acid biosynthesis; L-serine biosynthesis; L-serine from 3-phospho-D-glycerate: step 2/3. Its pathway is cofactor biosynthesis; pyridoxine 5'-phosphate biosynthesis; pyridoxine 5'-phosphate from D-erythrose 4-phosphate: step 3/5. Its function is as follows. Catalyzes the reversible conversion of 3-phosphohydroxypyruvate to phosphoserine and of 3-hydroxy-2-oxo-4-phosphonooxybutanoate to phosphohydroxythreonine. The chain is Phosphoserine aminotransferase from Escherichia coli O127:H6 (strain E2348/69 / EPEC).